A 335-amino-acid chain; its full sequence is Dihydroorotate dehydrogenase (quinone) (335 aa).

FMN is bound by residues 61-65 and Thr-85; that span reads AGLDK. Lys-65 serves as a coordination point for substrate. Residue 110-114 coordinates substrate; it reads NRMGF. FMN-binding residues include Asn-138 and Asn-171. Asn-171 contributes to the substrate binding site. Residue Ser-174 is the Nucleophile of the active site. Asn-176 serves as a coordination point for substrate. Residues Lys-216 and Thr-244 each contribute to the FMN site. 245 to 246 contributes to the substrate binding site; sequence NT. Residues Gly-267, Gly-296, and 317–318 contribute to the FMN site; that span reads YS.

Belongs to the dihydroorotate dehydrogenase family. Type 2 subfamily. In terms of assembly, monomer. The cofactor is FMN.

It is found in the cell membrane. It catalyses the reaction (S)-dihydroorotate + a quinone = orotate + a quinol. The protein operates within pyrimidine metabolism; UMP biosynthesis via de novo pathway; orotate from (S)-dihydroorotate (quinone route): step 1/1. Catalyzes the conversion of dihydroorotate to orotate with quinone as electron acceptor. This Pseudoalteromonas atlantica (strain T6c / ATCC BAA-1087) protein is Dihydroorotate dehydrogenase (quinone).